Reading from the N-terminus, the 286-residue chain is Polygalacturonan/rhamnogalacturonan transport system permease protein YtcP (286 aa).

The next 6 membrane-spanning stretches (helical) occupy residues Leu-9–Ile-29, Leu-69–Leu-89, Met-106–Val-126, Leu-131–Ile-151, Gly-176–Phe-196, and Thr-251–Ile-271. The region spanning Leu-69–Ile-271 is the ABC transmembrane type-1 domain.

Belongs to the binding-protein-dependent transport system permease family. CysTW subfamily. As to quaternary structure, the complex is probably composed of two ATP-binding proteins (MsmX), two transmembrane proteins (YtcP and YteP) and a solute-binding protein (YtcQ).

The protein localises to the cell membrane. Its function is as follows. Involved in pectin degradation. Part of the ABC transporter complex YtcQP-YteP involved in the uptake of polygalacturonan and rhamnogalacturonan type I. Responsible for the translocation of the substrate across the membrane. This is Polygalacturonan/rhamnogalacturonan transport system permease protein YtcP (ytcP) from Bacillus subtilis (strain 168).